Reading from the N-terminus, the 237-residue chain is Uridylate kinase (237 aa).

9-12 (KLSG) lines the ATP pocket. The tract at residues 17–22 (GSQGYG) is involved in allosteric activation by GTP. A UMP-binding site is contributed by glycine 51. Residues glycine 52 and arginine 56 each contribute to the ATP site. UMP is bound by residues aspartate 71 and 132-139 (CGNPFFTT). Positions 159, 165, and 168 each coordinate ATP.

It belongs to the UMP kinase family. In terms of assembly, homohexamer.

Its subcellular location is the cytoplasm. It carries out the reaction UMP + ATP = UDP + ADP. The protein operates within pyrimidine metabolism; CTP biosynthesis via de novo pathway; UDP from UMP (UMPK route): step 1/1. With respect to regulation, allosterically activated by GTP. Inhibited by UTP. In terms of biological role, catalyzes the reversible phosphorylation of UMP to UDP. This is Uridylate kinase from Synechococcus sp. (strain CC9902).